We begin with the raw amino-acid sequence, 577 residues long: Arginine--tRNA ligase (577 aa).

The 'HIGH' region motif lies at 122–132 (PNVAKEMHVGH).

It belongs to the class-I aminoacyl-tRNA synthetase family. In terms of assembly, monomer.

The protein resides in the cytoplasm. The catalysed reaction is tRNA(Arg) + L-arginine + ATP = L-arginyl-tRNA(Arg) + AMP + diphosphate. This Escherichia fergusonii (strain ATCC 35469 / DSM 13698 / CCUG 18766 / IAM 14443 / JCM 21226 / LMG 7866 / NBRC 102419 / NCTC 12128 / CDC 0568-73) protein is Arginine--tRNA ligase.